Here is a 163-residue protein sequence, read N- to C-terminus: Nucleotide-binding protein YajQ (163 aa).

It belongs to the YajQ family.

In terms of biological role, nucleotide-binding protein. The sequence is that of Nucleotide-binding protein YajQ from Salmonella agona (strain SL483).